Consider the following 562-residue polypeptide: Phosphopantothenoylcysteine decarboxylase subunit SIS2 (562 aa).

A compositionally biased stretch (polar residues) spans 1-10; the sequence is MTAVASTSGK. Disordered regions lie at residues 1–63, 97–165, and 490–562; these read MTAV…SNAT, FSDL…KDYD, and GYPK…DKHQ. Over residues 27–42 the composition is skewed to basic and acidic residues; that stretch reads GQKEILLDHEDAKGKD. 2 stretches are compositionally biased toward polar residues: residues 44 to 63 and 99 to 113; these read IINS…SNAT and DLKQ…TQLK. Residues S47, S50, S54, and S56 each carry the phosphoserine modification. The segment covering 121 to 134 has biased composition (low complexity); it reads SPNSNPAPVSNSIP. A compositionally biased stretch (polar residues) spans 142 to 156; it reads NHTNTSRTTQLSGSP. Phosphoserine is present on S155. A compositionally biased stretch (acidic residues) spans 496–553; sequence EEEDDDEDEEEDDDEEEDTEDKNENNNDDDDDDDDDDDDDDDDDDDDDDDDEDEDEAE.

This sequence belongs to the HFCD (homooligomeric flavin containing Cys decarboxylase) superfamily. In terms of assembly, interacts with the C-terminal domain of PPZ1. Component of the phosphopantothenoylcysteine decarboxylase (PPCDC) complex, a heterotrimer composed of CAB3, SIS2 and VHS3.

It localises to the nucleus. Its subcellular location is the cytoplasm. In terms of biological role, component of the phosphopantothenoylcysteine decarboxylase (PPCDC) involved in the coenzyme A synthesis. Acts as an inhibitory subunit of protein phosphatase PPZ1, which is involved in many cellular processes such as G1-S transition or salt tolerance. Also modulates the expression of the ENA1 ATPase. The chain is Phosphopantothenoylcysteine decarboxylase subunit SIS2 (SIS2) from Saccharomyces cerevisiae (strain ATCC 204508 / S288c) (Baker's yeast).